The sequence spans 237 residues: MNGEDPQERPDFIRAIINGLERYNPEAAGTLEAYLTQQCEEKFCDCNANRALLKLYQLNPDRIKDEVITNILVKAMTQFPSPQFDLALHLLSPSQSNPGPNSSSELTEAVSKLRALNAQLEGAEYARFWATLDSDDLYADLTTDIAGFEDMIRVRIAQLVGQSYREIQFPVLESWLGLNNSEATTQFITETCGWKVEGDVVQIPKNADNEARKAEIREDVNVDMFARVIKRSWEESA.

Positions 44–219 constitute a PCI domain; sequence CDCNANRALL…EARKAEIRED (176 aa).

The protein belongs to the eIF-3 subunit K family. Component of the eukaryotic translation initiation factor 3 (eIF-3) complex.

It is found in the cytoplasm. Component of the eukaryotic translation initiation factor 3 (eIF-3) complex, which is involved in protein synthesis of a specialized repertoire of mRNAs and, together with other initiation factors, stimulates binding of mRNA and methionyl-tRNAi to the 40S ribosome. The eIF-3 complex specifically targets and initiates translation of a subset of mRNAs involved in cell proliferation. The sequence is that of Eukaryotic translation initiation factor 3 subunit K from Neurospora crassa (strain ATCC 24698 / 74-OR23-1A / CBS 708.71 / DSM 1257 / FGSC 987).